A 286-amino-acid polypeptide reads, in one-letter code: Ribosomal RNA small subunit methyltransferase H (286 aa).

S-adenosyl-L-methionine is bound by residues 25-27, aspartate 45, leucine 79, aspartate 93, and glutamine 100; that span reads GGH.

The protein belongs to the methyltransferase superfamily. RsmH family.

Its subcellular location is the cytoplasm. The catalysed reaction is cytidine(1402) in 16S rRNA + S-adenosyl-L-methionine = N(4)-methylcytidine(1402) in 16S rRNA + S-adenosyl-L-homocysteine + H(+). Specifically methylates the N4 position of cytidine in position 1402 (C1402) of 16S rRNA. This Petrotoga mobilis (strain DSM 10674 / SJ95) protein is Ribosomal RNA small subunit methyltransferase H.